A 342-amino-acid chain; its full sequence is Deoxyguanosinetriphosphate triphosphohydrolase-like protein (342 aa).

The region spanning 75 to 190 (RLVHTLEVSQ…VRFADKIAYV (116 aa)) is the HD domain.

Belongs to the dGTPase family. Type 2 subfamily.

The polypeptide is Deoxyguanosinetriphosphate triphosphohydrolase-like protein (Clostridium perfringens (strain SM101 / Type A)).